We begin with the raw amino-acid sequence, 613 residues long: Probable hydrolase clz13 (613 aa).

Positions 1 to 25 are cleaved as a signal peptide; that stretch reads MCLLSMRFTVAILLVLLSHCGGSHA. N-linked (GlcNAc...) asparagine glycans are attached at residues asparagine 61, asparagine 89, asparagine 286, asparagine 422, asparagine 456, asparagine 477, and asparagine 581.

This sequence belongs to the beta-lactamase family.

It participates in secondary metabolite biosynthesis. In terms of biological role, probable hydrolase; part of the gene cluster that mediates the biosynthesis of squalestatin S1 (SQS1, also known as zaragozic acid A), a heavily oxidized fungal polyketide that offers potent cholesterol lowering activity by targeting squalene synthase (SS). SQS1 is composed of a 2,8-dioxobicyclic[3.2.1]octane-3,4,5-tricarboxyclic acid core that is connected to two lipophilic polyketide arms. These initial steps feature the priming of an unusual benzoic acid starter unit onto the highly reducing polyketide synthase clz14, followed by oxaloacetate extension and product release to generate a tricarboxylic acid containing product. The phenylalanine ammonia lyase (PAL) clz10 and the acyl-CoA ligase clz12 are involved in transforming phenylalanine into benzoyl-CoA. The citrate synthase-like protein clz17 is involved in connecting the C-alpha-carbons of the hexaketide chain and oxaloacetate to afford the tricarboxylic acid unit. The potential hydrolytic enzymes, clz11 and clz13, are in close proximity to pks2 and may participate in product release. On the other side, the tetraketide arm is synthesized by a the squalestatin tetraketide synthase clz2 and enzymatically esterified to the core in the last biosynthetic step, by the acetyltransferase clz6. The biosynthesis of the tetraketide must involve 3 rounds of chain extension. After the first and second rounds methyl-transfer occurs, and in all rounds of extension the ketoreductase and dehydratase are active. The enoyl reductase and C-MeT of clz2 are not active in the final round of extension. The acetyltransferase clz6 appears to have a broad substrate selectivity for its acyl CoA substrate, allowing the in vitro synthesis of novel squalestatins. The biosynthesis of SQS1 requires several oxidative steps likely performed by oxidoreductases clz3, clz15 and clz16. Finally, in support of the identification of the cluster as being responsible for SQS1 production, the cluster contains a gene encoding a putative squalene synthase (SS) clz20, suggesting a likely mechanism for self-resistance. The protein is Probable hydrolase clz13 of Cochliobolus lunatus (Filamentous fungus).